The sequence spans 218 residues: N-(5'-phosphoribosyl)anthranilate isomerase (218 aa).

The protein belongs to the TrpF family.

It catalyses the reaction N-(5-phospho-beta-D-ribosyl)anthranilate = 1-(2-carboxyphenylamino)-1-deoxy-D-ribulose 5-phosphate. Its pathway is amino-acid biosynthesis; L-tryptophan biosynthesis; L-tryptophan from chorismate: step 3/5. This is N-(5'-phosphoribosyl)anthranilate isomerase from Halalkalibacterium halodurans (strain ATCC BAA-125 / DSM 18197 / FERM 7344 / JCM 9153 / C-125) (Bacillus halodurans).